The following is a 143-amino-acid chain: Histone H2A.z (143 aa).

The protein belongs to the histone H2A family. The nucleosome is a histone octamer containing two molecules each of H2A, H2B, H3 and H4 assembled in one H3-H4 heterotetramer and two H2A-H2B heterodimers. The octamer wraps approximately 147 bp of DNA.

It localises to the nucleus. Its subcellular location is the chromosome. In terms of biological role, core component of nucleosome which plays a central role in DNA double strand break (DSB) repair. Nucleosomes wrap and compact DNA into chromatin, limiting DNA accessibility to the cellular machineries which require DNA as a template. Histones thereby play a central role in transcription regulation, DNA repair, DNA replication and chromosomal stability. DNA accessibility is regulated via a complex set of post-translational modifications of histones, also called histone code, and nucleosome remodeling. The polypeptide is Histone H2A.z (H2AZ) (Dictyostelium discoideum (Social amoeba)).